Here is a 236-residue protein sequence, read N- to C-terminus: Mediator of RNA polymerase II transcription subunit 20 (236 aa).

This sequence belongs to the Mediator complex subunit 20 family. As to quaternary structure, component of the Mediator complex.

It is found in the nucleus. Functionally, component of the Mediator complex, a coactivator involved in the regulated transcription of nearly all RNA polymerase II-dependent genes. Mediator functions as a bridge to convey information from gene-specific regulatory proteins to the basal RNA polymerase II transcription machinery. Mediator is recruited to promoters by direct interactions with regulatory proteins and serves as a scaffold for the assembly of a functional preinitiation complex with RNA polymerase II and the general transcription factors. In Debaryomyces hansenii (strain ATCC 36239 / CBS 767 / BCRC 21394 / JCM 1990 / NBRC 0083 / IGC 2968) (Yeast), this protein is Mediator of RNA polymerase II transcription subunit 20 (SRB2).